Here is a 473-residue protein sequence, read N- to C-terminus: Putative tyrosine recombinase XerC (473 aa).

The region spanning 4–82 is the Core-binding (CB) domain; that stretch reads MTLPELTQEY…HLRTVYRYAM (79 aa). Residues 118-305 form the Tyr recombinase domain; sequence RNWLRFLVQE…DYDLMREVMN (188 aa). Active-site residues include Arg-156, Lys-183, His-256, Arg-259, and His-283. The active-site O-(3'-phospho-DNA)-tyrosine intermediate is Tyr-292. Polar residues predominate over residues 341 to 352; sequence SGTELQPATTES. Residues 341–365 are disordered; it reads SGTELQPATTESSEAKKADDTASNP.

The protein belongs to the 'phage' integrase family.

It is found in the cytoplasm. Its function is as follows. Site-specific tyrosine recombinase, which acts by catalyzing the cutting and rejoining of the recombining DNA molecules. The sequence is that of Putative tyrosine recombinase XerC from Pseudomonas syringae.